The sequence spans 226 residues: Lipoprotein-releasing system ATP-binding protein LolD (226 aa).

The 221-residue stretch at 6-226 folds into the ABC transporter domain; sequence LKLDNIRRAF…KMSEGLLVEV (221 aa). ATP is bound at residue 42-49; it reads GPSGAGKS.

This sequence belongs to the ABC transporter superfamily. Lipoprotein translocase (TC 3.A.1.125) family. In terms of assembly, the complex is composed of two ATP-binding proteins (LolD) and two transmembrane proteins (LolC and LolE).

The protein resides in the cell inner membrane. Part of the ABC transporter complex LolCDE involved in the translocation of mature outer membrane-directed lipoproteins, from the inner membrane to the periplasmic chaperone, LolA. Responsible for the formation of the LolA-lipoprotein complex in an ATP-dependent manner. In Paramagnetospirillum magneticum (strain ATCC 700264 / AMB-1) (Magnetospirillum magneticum), this protein is Lipoprotein-releasing system ATP-binding protein LolD.